Consider the following 196-residue polypeptide: MLDRIKVCFTESIQTQIAAAEALPDAISRGAIAMVQSLLNGNKILCCGNGTSAANSQHFAASMINRFEAERPSLPAIALNADNVVLTAIANDRLHEEIYAKQVRALGQAGDVLLAISTRGNSRDIVKAVESAVTRDMTIVALTGYDGGELAGLLGPQDVEIRIPSHRSARIQEMHMLTVNCLCDLIDNTLFPHQND.

Positions 34 to 196 (MVQSLLNGNK…DNTLFPHQND (163 aa)) constitute an SIS domain.

The protein belongs to the SIS family. DiaA subfamily. Homotetramer; dimer of dimers.

In terms of biological role, required for the timely initiation of chromosomal replication via direct interactions with the DnaA initiator protein. This Pectobacterium atrosepticum (strain SCRI 1043 / ATCC BAA-672) (Erwinia carotovora subsp. atroseptica) protein is DnaA initiator-associating protein DiaA.